The primary structure comprises 97 residues: YcgL domain-containing protein PSPTO_3921 (97 aa).

Residues 3-87 enclose the YcgL domain; the sequence is RICSIYRSPK…AEDEYIEHLP (85 aa).

This chain is YcgL domain-containing protein PSPTO_3921, found in Pseudomonas syringae pv. tomato (strain ATCC BAA-871 / DC3000).